A 33-amino-acid polypeptide reads, in one-letter code: Ice-structuring protein GS-5 (33 aa).

Position 1 is a blocked amino end (Met) (methionine 1).

The protein belongs to the type-I AFP family.

Its function is as follows. Antifreeze proteins lower the blood freezing point. This chain is Ice-structuring protein GS-5, found in Myoxocephalus aenaeus (Grubby sculpin).